The chain runs to 382 residues: MHISVILFCALWSAVSAENSDDYELMYVNLDNEIDNGLHPTEDPTPCDCSRENSEWDKLFTMLENSQMREGMLLQATDVMLRGELQKLQAELGRLEGSLQKLCGPEAPSETRLARALDDLLQASRDAGRRLARLEDAGALRPQEEAGRALGAVLEELRRTRADLRAVQGWAASRWLPAGCETAILFPMRSKKIFASVHPVTPMKLETFSACIWVKATEVLNKTVLFSYGTKRNPYEIQLYLSYRSIMLVVGGEENRLVADAVISLGTWTHLCSTWDSKKGHMALWVNGDSVATAVDMATGHVVPEGGILQIGQEKNGCCVGGGFDETLAFSGRLTGFNIWEGVLSNEEIREAGGAESCHIRGNVVGWGVTEIQPHGGAQYVY.

Residues 1–17 (MHISVILFCALWSAVSA) form the signal peptide. Positions 79–137 (VMLRGELQKLQAELGRLEGSLQKLCGPEAPSETRLARALDDLLQASRDAGRRLARLEDA) form a coiled coil. 2 cysteine pairs are disulfide-bonded: C180-C358 and C211-C272. In terms of domain architecture, Pentraxin (PTX) spans 180–382 (CETAILFPMR…QPHGGAQYVY (203 aa)). N-linked (GlcNAc...) asparagine glycosylation is present at N221.

Homooctamer; disulfide-linked. Binds to C1q.

It localises to the secreted. In terms of biological role, plays a role in the regulation of innate resistance to pathogens, inflammatory reactions, possibly clearance of self-components and female fertility. The polypeptide is Pentraxin-related protein PTX3 (PTX3) (Bos taurus (Bovine)).